Reading from the N-terminus, the 521-residue chain is Amidase 1 (521 aa).

Catalysis depends on charge relay system residues Lys-112 and Ser-187. Residues Ser-187 and 208–211 each bind substrate; that span reads IGGS. The active-site Acyl-ester intermediate is Ser-211.

The protein belongs to the amidase family.

The catalysed reaction is a monocarboxylic acid amide + H2O = a monocarboxylate + NH4(+). Its pathway is xenobiotic degradation. In terms of biological role, amidase; part of the Fusarium detoxification of benzoxazolinone cluster 1 (FDB1) involved in the degradation of benzoxazolinones produced by the host plant. Maize, wheat, and rye produce the 2 benzoxazinone phytoanticipins 2,4-dihy-droxy-7-methoxy-1,4-benzoxazin-3-one (DIMBOA) and 2,4-dihydroxy-1,4-benzoxazin-3-one (DIBOA) that, due to their inherent instability once released, spontaneously degrade to the more stable corresponding benzoxazolinones, 6-methoxy-2-benzoxazolinone (MBOA) and 2-benzoxazolinone (BOA), respectively. The first step in the detoxification of benzoxazolinones involves the hydrolysis of the cyclic ester bond of benzoxazolinones by the FDB1 cluster gamma-lactamase MBL1 to aminophenols. MBL1 is able to convert BOA into 2-aminophenol (2-AP), as well as MBOA into 5-methoxy-2-aminophenol (2-AMP). The FDB2 cluster N-malonyltransferase FDB2/NAT1 then metabolizes aminophenols via N-malonylation to non-toxic malonamic acids. FDB2/NAT1 converts 2-AP into N-(2-hydroxyphenyl) malonamic acid (HPMA) and 2-AMP into N-(2-hydroxy-4-methoxyphenyl) malonamic acid (HMPMA). The duplicated dienlactone hydrolases DLH1 and DLH2 may provide redundant function for hydrolyzing the lactone moiety in the BOA molecule. The roles of the amidases an other enzymes encoded by the 2 FDB clusters have not been identified so far. The polypeptide is Amidase 1 (Gibberella moniliformis (strain M3125 / FGSC 7600) (Maize ear and stalk rot fungus)).